Here is an 820-residue protein sequence, read N- to C-terminus: Leucine--tRNA ligase (820 aa).

A 'HIGH' region motif is present at residues 42–52 (PYPSGDLHMGH). Residues 576–580 (KMSKS) carry the 'KMSKS' region motif. ATP is bound at residue Lys-579.

The protein belongs to the class-I aminoacyl-tRNA synthetase family.

It localises to the cytoplasm. It catalyses the reaction tRNA(Leu) + L-leucine + ATP = L-leucyl-tRNA(Leu) + AMP + diphosphate. The polypeptide is Leucine--tRNA ligase (Coxiella burnetii (strain CbuG_Q212) (Coxiella burnetii (strain Q212))).